The chain runs to 511 residues: Cytochrome P450 monooxyhenase eriC (511 aa).

A helical transmembrane segment spans residues 2–22 (VLADFISIPTVSIACLAVLGI). A heme-binding site is contributed by C445.

Belongs to the cytochrome P450 family. Heme is required as a cofactor.

The protein localises to the membrane. It catalyses the reaction erinacol + reduced [NADPH--hemoprotein reductase] + O2 = cyathadiol + oxidized [NADPH--hemoprotein reductase] + H2O + H(+). It functions in the pathway secondary metabolite biosynthesis. Its function is as follows. Cytochrome P450 monooxygenase; part of the gene cluster that mediates the biosynthesis of erinacines, cyathane-xylosides that show unique biological activities, including leishmanicidal activity, stimulating activity for nerve growth-factor synthesis, and agonistic activity toward the kappa opioid receptor. Within the pathway, eriC hydroxylates erinacol at C-15 of the seven-membered ring to yield cyathadiol. The first step of the erinacines biosynthesis pathway is catalyzed by the geranylgeranyl diphosphate (GGPP) synthase eriE via conversion of farnesyl pyrophosphate and isopentyl pyrophosphate into geranylgeranyl pyrophosphate (GGPP). GGPP is then substrate of the diterpene cyclase eriG for the production of cyatha-3,12-diene. The cytochrome P450 monooxygenase eriI then hydroxylates cyatha-3,12-diene at C-14 of the seven-membered ring to produce erinacol, which is further hydroxylated at C-15 by the cytochrome P450 monooxygenase eriC to yield cyathadiol. The cytochrome P450 monooxygenase eriA then catalyzes C-11 hydroxylation in the presence of the short chain dehydrogenase/reductase (SDR) eriH, which leads to the production of cyathatriol. The acetyltransferase eriL converts cyathatriol into 11-O-acetyl-cyathatriol. The SDR eriH catalyzes further oxidation of 11-O-acetyl-cyathatriol into 1-O-acetylcyathin A3. Finally, the glycosyl transferase eriJ tranfers xylose from UDP-xylose onto C-14 of 11-O-acetyl-cyathatriol to form eracine Q. EriJ is also able to convert 11-O-acetyl-cyathatriol to eracine Q2 by using UDP-D-glucose as cosubstrate, but at a lower rate. In Hericium erinaceus (Lion's mane mushroom), this protein is Cytochrome P450 monooxyhenase eriC.